The sequence spans 342 residues: Pre-mRNA-splicing factor 18 (342 aa).

Met1 bears the N-acetylmethionine mark.

This sequence belongs to the PRP18 family. As to quaternary structure, heterodimer with PPIH. Interacts with PRPF4 and with the spliceosome. Part of a complex containing U4/U6 snRNPs.

It localises to the nucleus speckle. Participates in the second step of pre-mRNA splicing. This is Pre-mRNA-splicing factor 18 (PRPF18) from Pongo abelii (Sumatran orangutan).